Here is a 385-residue protein sequence, read N- to C-terminus: 2-oxoglutarate-dependent dioxygenase AFUA_1G01000 (385 aa).

The region spanning 203 to 327 is the Fe2OG dioxygenase domain; sequence PSDDFLRLLR…RYSVLVGTRP (125 aa). His-230, Asp-232, and His-304 together coordinate Fe cation. Arg-318 contacts 2-oxoglutarate.

The protein belongs to the iron/ascorbate-dependent oxidoreductase family. Requires Fe(2+) as cofactor.

In terms of biological role, 2-oxoglutarate-dependent dioxygenase; part of the gene cluster that mediates the biosynthesis of fumigermin that inhibits germination of spores of the inducing S.rapamycinicus, and thus helps the fungus to defend resources in the shared habitat against a bacterial competitor. The partially reducing polyketide synthase fngA alone is sufficient for the production of fumigermin. FgnA catalyzes the condensation of 3 malonyl-CoA units to an acetyl-CoA starter, and 3 methylations to yield fumigermin. It is remarkable that the five cluster genes including fgnA are conserved in distantly related fungi, supporting the assumption of a fumigermin cluster; it is thus possible that originally all five genes were functional, but that the genes encoding tailoring enzymes became inactive from mutations, similar to the case of the fgnA gene in strains A1163 and Af293. The sequence is that of 2-oxoglutarate-dependent dioxygenase AFUA_1G01000 from Aspergillus fumigatus (strain ATCC MYA-4609 / CBS 101355 / FGSC A1100 / Af293) (Neosartorya fumigata).